A 609-amino-acid chain; its full sequence is Glutamine--fructose-6-phosphate aminotransferase [isomerizing] (609 aa).

The Nucleophile; for GATase activity role is filled by cysteine 2. The 218-residue stretch at 2 to 219 folds into the Glutamine amidotransferase type-2 domain; it reads CGIFGYLGNQ…SGEFAIVSQG (218 aa). 2 consecutive SIS domains span residues 285–426 and 458–599; these read LSDV…VHGA and WAQP…IDCP. Lysine 604 serves as the catalytic For Fru-6P isomerization activity.

Homodimer.

It is found in the cytoplasm. The catalysed reaction is D-fructose 6-phosphate + L-glutamine = D-glucosamine 6-phosphate + L-glutamate. Its function is as follows. Catalyzes the first step in hexosamine metabolism, converting fructose-6P into glucosamine-6P using glutamine as a nitrogen source. This is Glutamine--fructose-6-phosphate aminotransferase [isomerizing] from Chlamydia pneumoniae (Chlamydophila pneumoniae).